A 475-amino-acid chain; its full sequence is Ribulose bisphosphate carboxylase large chain (475 aa).

The propeptide occupies 1–2 (MS). Residue Pro3 is modified to N-acetylproline. Lys14 bears the N6,N6,N6-trimethyllysine mark. 2 residues coordinate substrate: Asn123 and Thr173. The active-site Proton acceptor is the Lys175. Residue Lys177 coordinates substrate. Residues Lys201, Asp203, and Glu204 each contribute to the Mg(2+) site. Residue Lys201 is modified to N6-carboxylysine. His294 serves as the catalytic Proton acceptor. Substrate-binding residues include Arg295, His327, and Ser379.

This sequence belongs to the RuBisCO large chain family. Type I subfamily. In terms of assembly, heterohexadecamer of 8 large chains and 8 small chains; disulfide-linked. The disulfide link is formed within the large subunit homodimers. Requires Mg(2+) as cofactor. In terms of processing, the disulfide bond which can form in the large chain dimeric partners within the hexadecamer appears to be associated with oxidative stress and protein turnover.

The protein localises to the plastid. Its subcellular location is the chloroplast. The catalysed reaction is 2 (2R)-3-phosphoglycerate + 2 H(+) = D-ribulose 1,5-bisphosphate + CO2 + H2O. The enzyme catalyses D-ribulose 1,5-bisphosphate + O2 = 2-phosphoglycolate + (2R)-3-phosphoglycerate + 2 H(+). In terms of biological role, ruBisCO catalyzes two reactions: the carboxylation of D-ribulose 1,5-bisphosphate, the primary event in carbon dioxide fixation, as well as the oxidative fragmentation of the pentose substrate in the photorespiration process. Both reactions occur simultaneously and in competition at the same active site. The protein is Ribulose bisphosphate carboxylase large chain of Psilotum nudum (Whisk fern).